The primary structure comprises 287 residues: Nucleotide-binding protein HD_0584 (287 aa).

8–15 (GRSGSGKS) is a binding site for ATP. Position 56–59 (56–59 (DIRN)) interacts with GTP.

It belongs to the RapZ-like family.

Displays ATPase and GTPase activities. The sequence is that of Nucleotide-binding protein HD_0584 from Haemophilus ducreyi (strain 35000HP / ATCC 700724).